Reading from the N-terminus, the 521-residue chain is Two-component response regulator ARR11 (521 aa).

Residues R12–L127 enclose the Response regulatory domain. A 4-aspartylphosphate modification is found at D63. Residues K192–R195 carry the Nuclear localization signal motif. A DNA-binding region (myb-like GARP) is located at residues R195–R246.

This sequence belongs to the ARR family. Type-B subfamily. Binds the target DNA as a monomer. Two-component system major event consists of a His-to-Asp phosphorelay between a sensor histidine kinase (HK) and a response regulator (RR). In plants, the His-to-Asp phosphorelay involves an additional intermediate named Histidine-containing phosphotransfer protein (HPt). This multistep phosphorelay consists of a His-Asp-His-Asp sequential transfer of a phosphate group between first a His and an Asp of the HK protein, followed by the transfer to a conserved His of the HPt protein and finally the transfer to an Asp in the receiver domain of the RR protein. In terms of tissue distribution, detected in the whole plant. Predominantly expressed in roots and stems.

It localises to the nucleus. Functionally, transcriptional activator that binds specifically to the DNA sequence 5'-[AG]GATT-3'. Functions as a response regulator involved in His-to-Asp phosphorelay signal transduction system. Phosphorylation of the Asp residue in the receiver domain activates the ability of the protein to promote the transcription of target genes. Could directly activate some type-A response regulators in response to cytokinins. The chain is Two-component response regulator ARR11 (ARR11) from Arabidopsis thaliana (Mouse-ear cress).